A 354-amino-acid chain; its full sequence is Uroporphyrinogen decarboxylase (354 aa).

Substrate is bound by residues 27-31, D77, Y154, T209, and H327; that span reads RQAGR.

It belongs to the uroporphyrinogen decarboxylase family. Homodimer.

It is found in the cytoplasm. The catalysed reaction is uroporphyrinogen III + 4 H(+) = coproporphyrinogen III + 4 CO2. The protein operates within porphyrin-containing compound metabolism; protoporphyrin-IX biosynthesis; coproporphyrinogen-III from 5-aminolevulinate: step 4/4. Catalyzes the decarboxylation of four acetate groups of uroporphyrinogen-III to yield coproporphyrinogen-III. The protein is Uroporphyrinogen decarboxylase of Escherichia coli (strain 55989 / EAEC).